We begin with the raw amino-acid sequence, 598 residues long: Aspartate--tRNA(Asp/Asn) ligase (598 aa).

Glu-174 provides a ligand contact to L-aspartate. Positions Gln-198–Lys-201 are aspartate. Residue Arg-220 participates in L-aspartate binding. Residues Arg-220–Glu-222 and Gln-229 contribute to the ATP site. His-458 is an L-aspartate binding site. Residue Glu-492 participates in ATP binding. Residue Arg-499 coordinates L-aspartate. Gly-544 to Arg-547 lines the ATP pocket.

Belongs to the class-II aminoacyl-tRNA synthetase family. Type 1 subfamily. Homodimer.

It localises to the cytoplasm. The catalysed reaction is tRNA(Asx) + L-aspartate + ATP = L-aspartyl-tRNA(Asx) + AMP + diphosphate. Its function is as follows. Aspartyl-tRNA synthetase with relaxed tRNA specificity since it is able to aspartylate not only its cognate tRNA(Asp) but also tRNA(Asn). Reaction proceeds in two steps: L-aspartate is first activated by ATP to form Asp-AMP and then transferred to the acceptor end of tRNA(Asp/Asn). This is Aspartate--tRNA(Asp/Asn) ligase from Dehalococcoides mccartyi (strain CBDB1).